The chain runs to 163 residues: Nodulin-13 (163 aa).

Kinetin is bound by residues Gln68 and Tyr82. Residues Gln68 and Tyr82 each coordinate N(6)-dimethylallyladenine. Trans-zeatin-binding residues include Gln68, Tyr82, and Tyr133.

This sequence belongs to the BetVI family. In terms of assembly, homodimer. In terms of tissue distribution, expressed in nodules, but not in leaves, stems, flowers and roots. Specifically located in the nodule cortex.

May be involved in nodule organogenesis rather in the processes related to nitrogen fixation or interactions with the bacteria. May regulate nodulation by controlling the levels of freely available cytokinins. This Medicago truncatula (Barrel medic) protein is Nodulin-13 (N13).